The following is a 388-amino-acid chain: Galactokinase (388 aa).

32–35 (EHTD) contacts substrate. Residues S66 and 123 to 129 (GASLSSS) contribute to the ATP site. Positions 129 and 161 each coordinate Mg(2+). D173 functions as the Proton acceptor in the catalytic mechanism. Position 223 (Y223) interacts with substrate.

It belongs to the GHMP kinase family. GalK subfamily.

The protein resides in the cytoplasm. It catalyses the reaction alpha-D-galactose + ATP = alpha-D-galactose 1-phosphate + ADP + H(+). It participates in carbohydrate metabolism; galactose metabolism. Its function is as follows. Catalyzes the transfer of the gamma-phosphate of ATP to D-galactose to form alpha-D-galactose-1-phosphate (Gal-1-P). This chain is Galactokinase, found in Staphylococcus carnosus (strain TM300).